The primary structure comprises 99 residues: DNA-binding protein Fis (99 aa).

Positions 75–94 (QTRAANMLGINRGTLRKKLK) form a DNA-binding region, H-T-H motif.

It belongs to the transcriptional regulatory Fis family. Homodimer.

Activates ribosomal RNA transcription. Plays a direct role in upstream activation of rRNA promoters. This chain is DNA-binding protein Fis, found in Haemophilus influenzae (strain 86-028NP).